A 194-amino-acid polypeptide reads, in one-letter code: MPKPEIVFVTGNANKLREVSMILGGDASPFTLVNEPLDLEELQGADLQEIALAKLQQAVHALGPGRPVFVEDTALSFDEFNGLPGAYIKWFIKSMGLAKVVKMLDSFENKGAYAITTIAYADSKGQLHVFQGKTHGTIVDSRGHTNFGWDSIFQPDESQNNETYAEMAKEDKNKISQRGRAFAQLKEYLYNTGI.

10–15 (TGNANK) is an ITP binding site. Glutamate 41 lines the Mg(2+) pocket. ITP is bound by residues lysine 54, 72 to 73 (DT), lysine 89, 147 to 150 (FGWD), lysine 172, and 177 to 178 (QR).

The protein belongs to the HAM1 NTPase family. As to quaternary structure, homodimer. Mg(2+) serves as cofactor. It depends on Mn(2+) as a cofactor.

The protein resides in the cytoplasm. It is found in the nucleus. It carries out the reaction ITP + H2O = IMP + diphosphate + H(+). The catalysed reaction is dITP + H2O = dIMP + diphosphate + H(+). The enzyme catalyses XTP + H2O = XMP + diphosphate + H(+). Functionally, pyrophosphatase that hydrolyzes non-canonical purine nucleotides such as inosine triphosphate (ITP), deoxyinosine triphosphate (dITP) or xanthosine 5'-triphosphate (XTP) to their respective monophosphate derivatives. The enzyme does not distinguish between the deoxy- and ribose forms. Probably excludes non-canonical purines from RNA and DNA precursor pools, thus preventing their incorporation into RNA and DNA and avoiding chromosomal lesions. The chain is Inosine triphosphate pyrophosphatase from Kluyveromyces lactis (strain ATCC 8585 / CBS 2359 / DSM 70799 / NBRC 1267 / NRRL Y-1140 / WM37) (Yeast).